We begin with the raw amino-acid sequence, 511 residues long: Cytochrome P450 705A5 (511 aa).

A helical membrane pass occupies residues 12-30 (CFIFLLLCLFSRLSYDLFF). Heme is bound at residue Cys-454.

The protein belongs to the cytochrome P450 family. Requires heme as cofactor. As to expression, expressed primarily in the root epidermis.

The protein localises to the membrane. In terms of biological role, converts thalian-diol to a desaturated thalian-diol. The chain is Cytochrome P450 705A5 (CYP705A5) from Arabidopsis thaliana (Mouse-ear cress).